The primary structure comprises 308 residues: ATP synthase gamma chain (308 aa).

It belongs to the ATPase gamma chain family. F-type ATPases have 2 components, CF(1) - the catalytic core - and CF(0) - the membrane proton channel. CF(1) has five subunits: alpha(3), beta(3), gamma(1), delta(1), epsilon(1). CF(0) has three main subunits: a, b and c.

It is found in the cell inner membrane. Produces ATP from ADP in the presence of a proton gradient across the membrane. The gamma chain is believed to be important in regulating ATPase activity and the flow of protons through the CF(0) complex. This chain is ATP synthase gamma chain, found in Salinibacter ruber (strain DSM 13855 / M31).